The chain runs to 303 residues: uncharacterized protein (303 aa).

The N-terminal stretch at 1–24 is a signal peptide; the sequence is MNRIALVFLYSLFLFNLAIGRVES. Residue Asn-116 is glycosylated (N-linked (GlcNAc...) asparagine). The tract at residues 124-179 is disordered; the sequence is FTRQQQKKSHDDDDDDDDSDSDESKEEEEKKKRDRKHRRDKRQAITQGSQNNTDPN. A compositionally biased stretch (acidic residues) spans 135–149; it reads DDDDDDDSDSDESKE. Over residues 155-164 the composition is skewed to basic residues; sequence KRDRKHRRDK. The span at 167-178 shows a compositional bias: polar residues; sequence AITQGSQNNTDP.

This is an uncharacterized protein from Caenorhabditis elegans.